We begin with the raw amino-acid sequence, 224 residues long: Ribose-5-phosphate isomerase A (224 aa).

Residues 34–37 (TGST), 87–90 (DGAD), and 100–103 (KGGG) contribute to the substrate site. E109 acts as the Proton acceptor in catalysis. K127 provides a ligand contact to substrate.

It belongs to the ribose 5-phosphate isomerase family. As to quaternary structure, homodimer.

It carries out the reaction aldehydo-D-ribose 5-phosphate = D-ribulose 5-phosphate. Its pathway is carbohydrate degradation; pentose phosphate pathway; D-ribose 5-phosphate from D-ribulose 5-phosphate (non-oxidative stage): step 1/1. Functionally, catalyzes the reversible conversion of ribose-5-phosphate to ribulose 5-phosphate. The chain is Ribose-5-phosphate isomerase A from Francisella tularensis subsp. tularensis (strain FSC 198).